The primary structure comprises 89 residues: Small ribosomal subunit protein uS14A (89 aa).

Belongs to the universal ribosomal protein uS14 family. In terms of assembly, part of the 30S ribosomal subunit. Contacts proteins S3 and S10.

Binds 16S rRNA, required for the assembly of 30S particles and may also be responsible for determining the conformation of the 16S rRNA at the A site. This chain is Small ribosomal subunit protein uS14A, found in Levilactobacillus brevis (strain ATCC 367 / BCRC 12310 / CIP 105137 / JCM 1170 / LMG 11437 / NCIMB 947 / NCTC 947) (Lactobacillus brevis).